Consider the following 397-residue polypeptide: Zinc finger transcription factor family protein 30 (397 aa).

The interval 1 to 40 (MKLEDDKIHSPTNTEEEGYGSDVEVENGTDISGSKGGSGV) is disordered. Over residues 14 to 27 (TEEEGYGSDVEVEN) the composition is skewed to acidic residues. 3 C2H2-type zinc fingers span residues 51–74 (FRCSICSKVFCHSSSLSRHRMQAH), 78–102 (YKCTVCRKDISSSESLRTHMFKQHH), and 107–125 (YMCRCCNWAFPDKSLLHIH).

The protein resides in the nucleus. The protein is Zinc finger transcription factor family protein 30 (ztf-30) of Caenorhabditis elegans.